We begin with the raw amino-acid sequence, 1713 residues long: Serine/threonine-protein kinase MRCK beta (1713 aa).

One can recognise a Protein kinase domain in the interval 76–342 (FEIIKVIGRG…IEDFKKHAFF (267 aa)). Residues 82-90 (IGRGAFGEV) and K105 each bind ATP. The active-site Proton acceptor is D200. A phosphoserine; by autocatalysis mark is found at S221 and S233. At T239 the chain carries Phosphothreonine; by autocatalysis. The AGC-kinase C-terminal domain maps to 343–413 (EGLNWENIRN…TTESCFSDRG (71 aa)). T423 is subject to Phosphothreonine. Residues 434–649 (LENSLQIEAY…ASKERKLREH (216 aa)) are a coiled coil. Positions 461–485 (LQESTQTVQSLHGSTRALGNSNRDK) are disordered. Polar residues predominate over residues 463–481 (ESTQTVQSLHGSTRALGNS). At R671 the chain carries Omega-N-methylarginine. 2 coiled-coil regions span residues 681–815 (QEIS…AHWE) and 882–939 (ALEA…FRAD). S927 is modified (phosphoserine). A Phosphotyrosine modification is found at Y954. Polar residues-rich tracts occupy residues 971–994 (ASDQETQASKLDLSPSVSVATSTE) and 1001–1014 (RSQQRPSTVPLPNT). A disordered region spans residues 971 to 1014 (ASDQETQASKLDLSPSVSVATSTEQQEDAARSQQRPSTVPLPNT). The segment at 1026-1076 (AHQFSIKSFPSPTQCSHCTSLMVGLIRQGYACEVCAFSCHVSCKDSAPQVC) adopts a Phorbol-ester/DAG-type zinc-finger fold. The PH domain maps to 1096-1215 (GTAYKGYVKV…WVGILEGLQA (120 aa)). In terms of domain architecture, CNH spans 1241–1515 (IKTVLAAAIV…RPLNSDGSLN (275 aa)). In terms of domain architecture, CRIB spans 1585–1598 (ISNPTNFNHVAHMG). The segment at 1615–1713 (PTAQEEKQGP…EGLDQPACDA (99 aa)) is disordered. Basic and acidic residues predominate over residues 1666-1677 (DFDKEPDSDSTK). A phosphoserine mark is found at S1682, S1684, S1688, S1692, and S1695.

It belongs to the protein kinase superfamily. AGC Ser/Thr protein kinase family. DMPK subfamily. As to quaternary structure, homodimer and homotetramer via the coiled coil regions. Interacts tightly with GTP-bound but not GDP-bound CDC42. Interacts with TJP1; this interaction requires the presence of catalytically active CDC42. Forms a tripartite complex with MYO18A and LURAP1 with the latter acting as an adapter connecting CDC42BPB and MYO18A. LURAP1 binding results in activation of CDC42BPB by abolition of its negative autoregulation. Interacts with STRIP1, STRN3 and SIKE1. Interacts with CPNE4 (via VWFA domain). Interacts with LURAP1. Interacts (via AGC-kinase C-terminal domain) with FAM89B/LRAP25 (via LRR repeat). Forms a tripartite complex with FAM89B/LRAP25 and LIMK1. The cofactor is Mg(2+). Post-translationally, proteolytically cleaved by caspases upon apoptosis induction. Expressed in all tissues examined with highest levels in lung and kidney.

The protein localises to the cytoplasm. It localises to the cell membrane. The protein resides in the cell junction. It is found in the cell projection. Its subcellular location is the lamellipodium. It carries out the reaction L-seryl-[protein] + ATP = O-phospho-L-seryl-[protein] + ADP + H(+). The catalysed reaction is L-threonyl-[protein] + ATP = O-phospho-L-threonyl-[protein] + ADP + H(+). Maintained in an inactive, closed conformation by an interaction between the kinase domain and the negative autoregulatory C-terminal coiled-coil region. Agonist binding to the phorbol ester binding site disrupts this, releasing the kinase domain to allow N-terminus-mediated dimerization and kinase activation by transautophosphorylation. Inhibited by chelerythrine chloride. In terms of biological role, serine/threonine-protein kinase which is an important downstream effector of CDC42 and plays a role in the regulation of cytoskeleton reorganization and cell migration. Regulates actin cytoskeletal reorganization via phosphorylation of PPP1R12C and MYL9/MLC2. In concert with MYO18A and LURAP1, is involved in modulating lamellar actomyosin retrograde flow that is crucial to cell protrusion and migration. Phosphorylates PPP1R12A. In concert with FAM89B/LRAP25 mediates the targeting of LIMK1 to the lamellipodium resulting in its activation and subsequent phosphorylation of CFL1 which is important for lamellipodial F-actin regulation. The sequence is that of Serine/threonine-protein kinase MRCK beta from Rattus norvegicus (Rat).